We begin with the raw amino-acid sequence, 507 residues long: E3 ubiquitin-protein ligase TRIM31 (507 aa).

The RING-type zinc-finger motif lies at cysteine 16 to lysine 56. The B box-type zinc finger occupies lysine 89 to isoleucine 130. The Zn(2+) site is built by cysteine 94, histidine 97, cysteine 116, and histidine 122. Coiled-coil stretches lie at residues glutamate 176–serine 241 and glutamate 269–alanine 298. The B30.2/SPRY domain occupies glutamate 315–proline 507.

The protein belongs to the TRIM/RBCC family. May form oligomers. Interacts with isoform p52shc of SHC1. Post-translationally, auto-ubiquitinated (in vitro). In terms of tissue distribution, highly expressed in the gastrointestrinal tract, with high expression in the small intestine, moderate in the large intestine and weak in the stomach and esophagus.

It is found in the cytoplasm. Its subcellular location is the mitochondrion. It catalyses the reaction S-ubiquitinyl-[E2 ubiquitin-conjugating enzyme]-L-cysteine + [acceptor protein]-L-lysine = [E2 ubiquitin-conjugating enzyme]-L-cysteine + N(6)-ubiquitinyl-[acceptor protein]-L-lysine.. It participates in protein modification; protein ubiquitination. Functionally, E3 ubiquitin-protein ligase that acts as a regulator of antiviral immune response and inflammation by mediating ubiquitination of substrates. Acts as a regulator of innate immune defense against viruses by mediating 'Lys-63'-linked ubiquitination of MAVS, promoting MAVS polymerization and formation of three-stranded helical filaments on mitochondria. Acts as a negative regulator of the NLRP3 inflammasome by catalyzing 'Lys-48'-linked ubiquitination of NLRP3, leading to its degradation. Regulator of Src-induced anchorage independent cell growth. The chain is E3 ubiquitin-protein ligase TRIM31 from Mus musculus (Mouse).